Consider the following 37-residue polypeptide: Large ribosomal subunit protein bL36 (37 aa).

The protein belongs to the bacterial ribosomal protein bL36 family.

This chain is Large ribosomal subunit protein bL36, found in Geobacter metallireducens (strain ATCC 53774 / DSM 7210 / GS-15).